Reading from the N-terminus, the 180-residue chain is Large ribosomal subunit protein uL15 (180 aa).

The segment at 1–62 is disordered; the sequence is MKKERLEQAA…KTAGRGSKGQ (62 aa). The segment covering 35–44 has biased composition (basic residues); that stretch reads GAKKEKKRVG.

The protein belongs to the universal ribosomal protein uL15 family. Part of the 50S ribosomal subunit.

Its function is as follows. Binds to the 23S rRNA. The protein is Large ribosomal subunit protein uL15 of Leptospira borgpetersenii serovar Hardjo-bovis (strain JB197).